Consider the following 223-residue polypeptide: Triosephosphate isomerase (223 aa).

6-8 (NLK) is a substrate binding site. Catalysis depends on His86, which acts as the Electrophile. Glu151 (proton acceptor) is an active-site residue. Positions 157 and 187 each coordinate substrate.

This sequence belongs to the triosephosphate isomerase family. Homodimer.

It is found in the cytoplasm. The catalysed reaction is D-glyceraldehyde 3-phosphate = dihydroxyacetone phosphate. It participates in carbohydrate biosynthesis; gluconeogenesis. The protein operates within carbohydrate degradation; glycolysis; D-glyceraldehyde 3-phosphate from glycerone phosphate: step 1/1. Functionally, involved in the gluconeogenesis. Catalyzes stereospecifically the conversion of dihydroxyacetone phosphate (DHAP) to D-glyceraldehyde-3-phosphate (G3P). This chain is Triosephosphate isomerase, found in Campylobacter jejuni subsp. jejuni serotype O:2 (strain ATCC 700819 / NCTC 11168).